The chain runs to 156 residues: Putative pre-16S rRNA nuclease (156 aa).

The protein belongs to the YqgF nuclease family.

The protein resides in the cytoplasm. Could be a nuclease involved in processing of the 5'-end of pre-16S rRNA. In Aromatoleum aromaticum (strain DSM 19018 / LMG 30748 / EbN1) (Azoarcus sp. (strain EbN1)), this protein is Putative pre-16S rRNA nuclease.